We begin with the raw amino-acid sequence, 240 residues long: Dihydromonapterin reductase (240 aa).

Tyrosine 152 acts as the Proton acceptor in catalysis.

It belongs to the short-chain dehydrogenases/reductases (SDR) family. FolM subfamily.

It catalyses the reaction (6S)-5,6,7,8-tetrahydrofolate + NADP(+) = 7,8-dihydrofolate + NADPH + H(+). The catalysed reaction is 7,8-dihydromonapterin + NADPH + H(+) = 5,6,7,8-tetrahydromonapterin + NADP(+). Functionally, catalyzes the reduction of dihydromonapterin to tetrahydromonapterin. Also has lower activity with dihydrofolate. The chain is Dihydromonapterin reductase (folM) from Escherichia coli O139:H28 (strain E24377A / ETEC).